The following is a 218-amino-acid chain: ADP-sugar pyrophosphatase (218 aa).

Met1 is modified (N-acetylmethionine). Position 10 is a phosphoserine (Ser10). A substrate-binding site is contributed by Trp27. Residue Lys41 forms a Glycyl lysine isopeptide (Lys-Gly) (interchain with G-Cter in SUMO2) linkage. Thr44 bears the Phosphothreonine mark. Residues 45–46 (WE) and Arg83 each bind substrate. The 141-residue stretch at 56-196 (KSADAVSVIP…EQHLTVDAKV (141 aa)) folds into the Nudix hydrolase domain. A Mg(2+)-binding site is contributed by Ala95. Positions 96-117 (GFIEDGESPEAAALRELEEETG) match the Nudix box motif. Phe97 serves as a coordination point for substrate. Mg(2+) is bound by residues Glu111 and Glu115. Residue Asp132 participates in substrate binding. Glu165 is a binding site for Mg(2+). Lys209 and Lys217 each carry N6-acetyllysine.

Belongs to the Nudix hydrolase family. As to quaternary structure, homodimer. Interacts with PARG. Mg(2+) is required as a cofactor. In terms of processing, phosphorylation at Thr-44 is required for homodimer stability; dephosphorylation results in destabilization of the homodimer. Dephosphorylation at Thr-44 promotes the ATP-synthesis activity. In terms of tissue distribution, widely expressed. Most abundant in liver.

It localises to the nucleus. It carries out the reaction D-ribose 5-phosphate + ATP + H(+) = ADP-D-ribose + diphosphate. The enzyme catalyses ADP-D-ribose + H2O = D-ribose 5-phosphate + AMP + 2 H(+). It catalyses the reaction 8-oxo-dGDP + H2O = 8-oxo-dGMP + phosphate + H(+). Enzyme that can either act as an ADP-sugar pyrophosphatase in absence of diphosphate or catalyze the synthesis of ATP in presence of diphosphate. In absence of diphosphate, hydrolyzes with similar activities various modified nucleoside diphosphates such as ADP-ribose, ADP-mannose, ADP-glucose, 8-oxo-GDP and 8-oxo-dGDP. Can also hydrolyze other nucleotide sugars with low activity. In presence of diphosphate, mediates the synthesis of ATP in the nucleus by catalyzing the conversion of ADP-ribose to ATP and ribose 5-phosphate. Nuclear ATP synthesis takes place when dephosphorylated at Thr-44. Nuclear ATP generation is required for extensive chromatin remodeling events that are energy-consuming. Does not play a role in U8 snoRNA decapping activity. Binds U8 snoRNA. In Mus musculus (Mouse), this protein is ADP-sugar pyrophosphatase.